A 212-amino-acid chain; its full sequence is Large ribosomal subunit protein uL3 (212 aa).

Residues 119–147 (YQGNIKRWGQSRGPETHGSRYHRIPGSMG) are disordered.

It belongs to the universal ribosomal protein uL3 family. In terms of assembly, part of the 50S ribosomal subunit. Forms a cluster with proteins L14 and L19.

Functionally, one of the primary rRNA binding proteins, it binds directly near the 3'-end of the 23S rRNA, where it nucleates assembly of the 50S subunit. The sequence is that of Large ribosomal subunit protein uL3 from Lactobacillus acidophilus (strain ATCC 700396 / NCK56 / N2 / NCFM).